The following is a 763-amino-acid chain: Phosphoglycerol transferase I (763 aa).

Transmembrane regions (helical) follow at residues 1–21, 26–46, 77–97, and 108–128; these read MSELLSFALFLASVLIYAWKA, WWFAATLTVLGLFVVLNITLF, ILPGIGIVLGLTAVFGALGWI, and FGYSLLALLLALGSVDASPAF.

Belongs to the OpgB family.

The protein resides in the cell inner membrane. It catalyses the reaction a phosphatidylglycerol + a membrane-derived-oligosaccharide D-glucose = a 1,2-diacyl-sn-glycerol + a membrane-derived-oligosaccharide 6-(glycerophospho)-D-glucose.. It functions in the pathway glycan metabolism; osmoregulated periplasmic glucan (OPG) biosynthesis. In terms of biological role, transfers a phosphoglycerol residue from phosphatidylglycerol to the membrane-bound nascent glucan backbones. The protein is Phosphoglycerol transferase I of Escherichia coli (strain 55989 / EAEC).